A 106-amino-acid chain; its full sequence is Defensin-like protein 1 (106 aa).

The first 25 residues, 1 to 25 (MARSLCFMAFAVLAMMLFVAYEVQA), serve as a signal peptide directing secretion. Disulfide bonds link Cys29/Cys73, Cys40/Cys60, Cys46/Cys67, and Cys50/Cys69.

Belongs to the DEFL family.

It localises to the secreted. It is found in the vacuole. This chain is Defensin-like protein 1 (THIO1), found in Nicotiana paniculata.